A 170-amino-acid chain; its full sequence is Photosystem II extrinsic protein V (170 aa).

A signal peptide spans 1–34 (MNKILGIDPLKKFIFGISAFVLLFWQLNVGAANA). Residues C70, C73, H74, and H125 each contribute to the heme c site.

Belongs to the cytochrome c family. PsbV subfamily. As to quaternary structure, PSII is composed of 1 copy each of membrane proteins PsbA, PsbB, PsbC, PsbD, PsbE, PsbF, PsbH, PsbI, PsbJ, PsbK, PsbL, PsbM, PsbT, PsbX, PsbY, PsbZ, Psb30/Ycf12, peripheral proteins PsbO, CyanoQ (PsbQ), PsbU, PsbV and a large number of cofactors. It forms dimeric complexes. Heme c is required as a cofactor.

The protein resides in the cellular thylakoid membrane. Its function is as follows. One of the extrinsic, lumenal subunits of photosystem II (PSII). PSII is a light-driven water plastoquinone oxidoreductase, using light energy to abstract electrons from H(2)O, generating a proton gradient subsequently used for ATP formation. The extrinsic proteins stabilize the structure of photosystem II oxygen-evolving complex (OEC), the ion environment of oxygen evolution and protect the OEC against heat-induced inactivation. Low-potential cytochrome c that plays a role in the OEC of PSII. This Picosynechococcus sp. (strain ATCC 27264 / PCC 7002 / PR-6) (Agmenellum quadruplicatum) protein is Photosystem II extrinsic protein V.